Reading from the N-terminus, the 402-residue chain is Deoxyguanosinetriphosphate triphosphohydrolase-like protein (402 aa).

The 145-residue stretch at 73–217 (RLTHTIEVAQ…AAIADDIAYN (145 aa)) folds into the HD domain.

It belongs to the dGTPase family. Type 2 subfamily.

The chain is Deoxyguanosinetriphosphate triphosphohydrolase-like protein from Brucella anthropi (strain ATCC 49188 / DSM 6882 / CCUG 24695 / JCM 21032 / LMG 3331 / NBRC 15819 / NCTC 12168 / Alc 37) (Ochrobactrum anthropi).